The primary structure comprises 163 residues: Nucleotide-binding protein HD_0358 (163 aa).

This sequence belongs to the YajQ family.

Functionally, nucleotide-binding protein. In Haemophilus ducreyi (strain 35000HP / ATCC 700724), this protein is Nucleotide-binding protein HD_0358.